Consider the following 336-residue polypeptide: NADH-quinone oxidoreductase subunit H (336 aa).

Transmembrane regions (helical) follow at residues 9–29 (LVWIVLLAIVLILCVAYLTYA), 77–97 (FLFAPVIIFVLALVGWAVIPF), 116–136 (LGVMYLLGVAALEVYGTIIAG), 156–176 (ISYEIVIAPVVMTVILLTGSL), 188–208 (LPYWVDILMLPMTFIFFVSIL), 236–256 (IPFALFFLGEYANMILSSSIM), 275–295 (IVPGFIWFILKIVFVLFCFLI), and 315–335 (VFLPVTLLWIVVIGGLVAFNI).

The protein belongs to the complex I subunit 1 family. As to quaternary structure, NDH-1 is composed of 14 different subunits. Subunits NuoA, H, J, K, L, M, N constitute the membrane sector of the complex.

The protein resides in the cell inner membrane. It catalyses the reaction a quinone + NADH + 5 H(+)(in) = a quinol + NAD(+) + 4 H(+)(out). In terms of biological role, NDH-1 shuttles electrons from NADH, via FMN and iron-sulfur (Fe-S) centers, to quinones in the respiratory chain. The immediate electron acceptor for the enzyme in this species is believed to be ubiquinone. Couples the redox reaction to proton translocation (for every two electrons transferred, four hydrogen ions are translocated across the cytoplasmic membrane), and thus conserves the redox energy in a proton gradient. This subunit may bind ubiquinone. The protein is NADH-quinone oxidoreductase subunit H of Neorickettsia sennetsu (strain ATCC VR-367 / Miyayama) (Ehrlichia sennetsu).